A 442-amino-acid chain; its full sequence is Galactose/N-acetylgalactosamine-binding lectin CEL-III (442 aa).

The propeptide at 1-10 (MVSLVPCGFA) is removed in mature form. At Gln11 the chain carries Pyrrolidone carboxylic acid. The has hemagglutinating activity towards rabbit erythrocytes, but no hemolytic activity towards them stretch occupies residues 11–304 (QVLCTNPLDI…DWEVPTATWN (294 aa)). Intrachain disulfides connect Cys14-Cys59, Cys31-Cys48, and Cys72-Cys88. D-galactose is bound by residues Asp19 and 33 to 36 (DIVG). Ricin B-type lectin domains follow at residues 28–102 (SKQC…RWRL) and 115–245 (EQVA…WSRP). The Ca(2+) site is built by Asp33, Ile34, and Gly36. Mg(2+)-binding residues include Asn42 and Ile43. Asp49 lines the D-galactose pocket. Asp53 is a binding site for Ca(2+). Residues Asn82 and Val83 each contribute to the Mg(2+) site. Residues Val117 and 131-134 (DVEG) each bind D-galactose. Cys129 and Cys146 are oxidised to a cystine. The Ca(2+) site is built by Asp131, Val132, and Gly134. Ile141 lines the Mg(2+) pocket. 144–147 (YDCQ) contacts D-galactose. Asp151, Asp178, Val179, and Gly181 together coordinate Ca(2+). Cys176 and Cys193 are joined by a disulfide. 178 to 181 (DVEG) contributes to the D-galactose binding site. Mg(2+) contacts are provided by Asn187 and Val188. Residue 191–194 (YSCE) participates in D-galactose binding. Ca(2+) contacts are provided by Asp198, Asp219, Val220, and Gly222. Residues Cys217 and Cys234 are joined by a disulfide bond. 219-222 (DVEG) is a binding site for D-galactose. Mg(2+)-binding residues include Asn228 and Val229. 232-235 (YRCD) contributes to the D-galactose binding site. A Ca(2+)-binding site is contributed by Asp239. 2 disulfides stabilise this stretch: Cys249/Cys254 and Cys264/Cys281. The region spanning 261–293 (SNKCLDVSGDQGTGDVGTWQCDGLPDQRFKWVF) is the Ricin B-type lectin 3 domain. Ca(2+)-binding residues include Asp266, Val267, and Gly269. 266-269 (DVSG) serves as a coordination point for D-galactose. Mg(2+)-binding residues include Asp275 and Val276. Residues 279–282 (WQCD) and Asp286 contribute to the D-galactose site. Asp286 contributes to the Ca(2+) binding site. The has a strong tendency to self-associate leading to formation of oligomers stretch occupies residues 294-442 (DDWEVPTATW…NEDCTFCTDI (149 aa)). Disulfide bonds link Cys308-Cys390, Cys377-Cys416, Cys425-Cys439, and Cys431-Cys436.

As to quaternary structure, oligomerizes in the human and rabbit erythrocyte membranes. Oligomerization is induced by binding of beta-1,4-linked disaccharide ligands such as lactose, lactulose, N-acetyllactosamine and phenyl-beta-D-galactoside, but only a little by N-acetylgalactosamine and galactose, and not at all by melibiose in aqueous solution in the presence of high salt concentration and pH 10. Forms heptamers that assemble into larger 21mer oligomers, which may be inserted as a transmembrane pore to the erythrocyte membrane. It depends on Ca(2+) as a cofactor. Requires Mg(2+) as cofactor. In terms of tissue distribution, expressed in body fluid (at protein level).

It localises to the secreted. Its activity is regulated as follows. Ca(2+) is required for hemolytic activity and the activity increases with increasing calcium concentration. Hemolytic activity is inhibited by N-acetylgalactosamine (GalNAc), lactose, lactulose, galactosamine, dextran with molecular masses greater than 4 kDa, to a lesser extent by inulin and only slightly by sucrose and melezitose, but not by glucose or mannose. The activity is abolished in the presence of 10 mM EDTA. Lactose-binding increases with increasing calcium concentration, but calcium has no effect on hemagglutinating activity. Cytotoxic effect on Madin-Darby canine kidney (MDCK) cell line is strongly inhibited by galactose, lactose and N-acetylgalactosamine (GalNAc), but not by raffinose, N-acetylglucosamine (GlcNAc), glucose, mannose, ribose or sucrose. Pore formation in artificial lactosyl ceramide (LacCer) or globotetraosylceramide (Gb4Cer) containing liposomes is strongly inhibited by lactose. In terms of biological role, galactose/N-acetylgalactosamine (Gal/GalNAc)-binding lectin with hemolytic activity. Favors saccharides that have a beta-1,4 linkage at the non-reducing end rather than saccharides having alpha-1,6 or alpha-1,4 linkages. Binds lactose, lactulose, GalNAc, galactosamine, methyl alpha-galactopyranoside, methyl beta-galactopyranoside, N-acetyllactosamine, p-nitrophenyl beta-D-galactopyranoside (pNP-Gal), p-nitrophenyl N-acetyl-beta-D-galactosaminide (pNP-GalNAc), asialofetuin, and human erythrocyte membrane lipids lactosyl ceramide (LacCer) and globoside globotetraosylceramide (Gb4Cer). Binds moderately to galactose, melibiose, raffinose, fucose, methyl alpha-galactoside and methyl beta-galactoside. Binds weakly to glucose, mannose and N-acetylglucosamine (GlcNAc). Has hemolytic activity towards human (A, B and O-type), rabbit and rat erythrocytes, but not towards mouse, chicken or horse erythrocytes. Forms ion-permeable transmembrane pores in the erythrocyte membrane as well as in artificial liposomes containing human erythrocyte membrane lipids LacCer, Gb4Cer and galactosyl ceramide (GalCer) leading to destruction of the membrane. Has hemagglutinating activity towards rabbit, human and rat erythrocytes, and at relatively high concentrations towards chicken and horse erythrocytes, but not towards mouse erythrocytes. Has dose-dependent cytotoxic effect on Madin-Darby canine kidney (MDCK), African green monkey kidney (Vero) and human epithelia carcinoma (HeLa) cell lines, but Chinese hamster ovary (CHO), rat sarcoma (XC) and potoroo rat kangaroo kidney (PtK1) cells are highly resistant to the cytotoxic effect of this protein. Impairs malaria parasite development in malaria parasite infected transgenic A.stephensi mosquitoes expressing this protein specifically in their midguts. Binds to ookinetes and leads to strong dose-dependent inhibition of ookinete formation in vitro. Leads to severely impaired oocyst formation and significantly reduced sporozoite production of rodent malaria parasite P.berghei in the salivary glands of the transgenic mosquitoes. The parasite transmission to uninfected mice (vectorial competence) of these mosquitoes is significantly impaired. Also leads to severely impaired oocyst formation of human malaria parasite P.falciparum in transgenic mosquitoes fed on mature P.falciparum gametocyte cultures. May be involved in defense mechanisms acting as a toxic protein to foreign microorganisms. May act in defense against predators. This chain is Galactose/N-acetylgalactosamine-binding lectin CEL-III, found in Pseudocnus echinatus (Sea cucumber).